The chain runs to 179 residues: Interleukin-10 (179 aa).

An N-terminal signal peptide occupies residues 1–19; that stretch reads MPSPALLCCCLVLLAGVGA. Cystine bridges form between Cys-31–Cys-127 and Cys-81–Cys-133. N-linked (GlcNAc...) asparagine glycosylation is present at Asn-135.

Belongs to the IL-10 family. Homodimer. Interacts with IL10RA and IL10RB.

It localises to the secreted. In terms of biological role, major immune regulatory cytokine that acts on many cells of the immune system where it has profound anti-inflammatory functions, limiting excessive tissue disruption caused by inflammation. Mechanistically, IL10 binds to its heterotetrameric receptor comprising IL10RA and IL10RB leading to JAK1 and STAT2-mediated phosphorylation of STAT3. In turn, STAT3 translocates to the nucleus where it drives expression of anti-inflammatory mediators. Targets antigen-presenting cells (APCs) such as macrophages and monocytes and inhibits their release of pro-inflammatory cytokines including granulocyte-macrophage colony-stimulating factor /GM-CSF, granulocyte colony-stimulating factor/G-CSF, IL-1 alpha, IL-1 beta, IL-6, IL-8 and TNF-alpha. Also interferes with antigen presentation by reducing the expression of MHC-class II and co-stimulatory molecules, thereby inhibiting their ability to induce T cell activation. In addition, controls the inflammatory response of macrophages by reprogramming essential metabolic pathways including mTOR signaling. This is Interleukin-10 (IL10) from Vulpes vulpes (Red fox).